Here is a 581-residue protein sequence, read N- to C-terminus: Laccase-1 (581 aa).

Residues 1–25 (MENLGFLIISTFLLLFTTLLPYSSA) form the signal peptide. Plastocyanin-like domains lie at 34 to 150 (NVEW…PRQP) and 161 to 312 (EIPI…YTGK). A glycan (N-linked (GlcNAc...) asparagine) is linked at Asn80. Cu cation contacts are provided by His84, His86, His129, and His131. Residues Asn241, Asn300, Asn386, and Asn403 are each glycosylated (N-linked (GlcNAc...) asparagine). The region spanning 429 to 565 (DFPEKPPNRF…AMGFIVKDGP (137 aa)) is the Plastocyanin-like 3 domain. Cu cation-binding residues include His482, His485, His487, His544, Cys545, His546, and His550.

The protein belongs to the multicopper oxidase family. It depends on Cu cation as a cofactor. As to expression, expressed in roots, stems and flowers.

It is found in the secreted. The protein localises to the extracellular space. Its subcellular location is the apoplast. It carries out the reaction 4 hydroquinone + O2 = 4 benzosemiquinone + 2 H2O. Its function is as follows. Lignin degradation and detoxification of lignin-derived products. This Arabidopsis thaliana (Mouse-ear cress) protein is Laccase-1 (LAC1).